The following is a 674-amino-acid chain: DNA ligase (674 aa).

Residues 34–38 (DFEFD), 83–84 (SL), and E117 contribute to the NAD(+) site. Residue K119 is the N6-AMP-lysine intermediate of the active site. The NAD(+) site is built by R140, E184, K297, and K321. Residues C415, C418, C433, and C439 each coordinate Zn(2+). The BRCT domain maps to 598–674 (LVNNNFEGQS…IDEDEFERML (77 aa)).

Belongs to the NAD-dependent DNA ligase family. LigA subfamily. Mg(2+) serves as cofactor. Requires Mn(2+) as cofactor.

The catalysed reaction is NAD(+) + (deoxyribonucleotide)n-3'-hydroxyl + 5'-phospho-(deoxyribonucleotide)m = (deoxyribonucleotide)n+m + AMP + beta-nicotinamide D-nucleotide.. In terms of biological role, DNA ligase that catalyzes the formation of phosphodiester linkages between 5'-phosphoryl and 3'-hydroxyl groups in double-stranded DNA using NAD as a coenzyme and as the energy source for the reaction. It is essential for DNA replication and repair of damaged DNA. In Chlorobaculum tepidum (strain ATCC 49652 / DSM 12025 / NBRC 103806 / TLS) (Chlorobium tepidum), this protein is DNA ligase.